The sequence spans 1104 residues: Receptor-type guanylate cyclase gcy-15 (1104 aa).

Residues 1-431 (MEIAINRLNA…ENCGPPANNT (431 aa)) lie on the Extracellular side of the membrane. Residues Asn-43, Asn-237, Asn-263, Asn-287, Asn-407, and Asn-429 are each glycosylated (N-linked (GlcNAc...) asparagine). Residues 432 to 452 (FIIVISVGVAVLIGLAIAAAF) form a helical membrane-spanning segment. Residues 453-1104 (LYKRYRYERR…QIQEKTYEFS (652 aa)) lie on the Cytoplasmic side of the membrane. The Protein kinase domain occupies 528–823 (FNTGSTARAG…QIKRKLKPLT (296 aa)). ATP contacts are provided by residues 534–542 (ARAGPFGPI) and Lys-576. A coiled-coil region spans residues 838–871 (IEKYTDKLEKDIAERNEELEAEKAKSEALLKMML). The Guanylate cyclase domain occupies 894–1024 (TVFFSDCPGF…DTVNTASRME (131 aa)).

This sequence belongs to the adenylyl cyclase class-4/guanylyl cyclase family. In terms of tissue distribution, expressed bilaterally in ASG sensory neurons.

The protein localises to the cell membrane. It catalyses the reaction GTP = 3',5'-cyclic GMP + diphosphate. Functionally, guanylate cyclase involved in the production of the second messenger cGMP. The chain is Receptor-type guanylate cyclase gcy-15 from Caenorhabditis elegans.